The chain runs to 339 residues: Cyclin-D1-1 (339 aa).

This sequence belongs to the cyclin family. Cyclin D subfamily. In terms of assembly, interacts with CDKA-1 and KRP6/ICK4. Expressed in roots, leaves and flowers.

Its function is as follows. May activate cell cycle in the root apical meristem (RAM) and promote embryonic root (radicle) protrusion. The sequence is that of Cyclin-D1-1 (CYCD1-1) from Arabidopsis thaliana (Mouse-ear cress).